Consider the following 1156-residue polypeptide: Pesticidal crystal protein Cry9Aa (1156 aa).

Positions M1–K23 are cleaved as a propeptide — removed in mature form.

This sequence belongs to the delta endotoxin family.

In terms of biological role, promotes colloidosmotic lysis by binding to the midgut epithelial cells of insects. This protein is toxic to Galleria mellonella. This chain is Pesticidal crystal protein Cry9Aa (cry9Aa), found in Bacillus thuringiensis subsp. galleriae.